A 918-amino-acid chain; its full sequence is Protein translocase subunit SecA (918 aa).

Residues Gln87, Gly105–Thr109, and Asp494 contribute to the ATP site. Basic and acidic residues predominate over residues Lys863–Val883. Residues Lys863–Lys918 form a disordered region.

This sequence belongs to the SecA family. In terms of assembly, monomer and homodimer. Part of the essential Sec protein translocation apparatus which comprises SecA, SecYEG and auxiliary proteins SecDF. Other proteins may also be involved.

The protein resides in the cell inner membrane. The protein localises to the cytoplasm. It catalyses the reaction ATP + H2O + cellular proteinSide 1 = ADP + phosphate + cellular proteinSide 2.. In terms of biological role, part of the Sec protein translocase complex. Interacts with the SecYEG preprotein conducting channel. Has a central role in coupling the hydrolysis of ATP to the transfer of proteins into and across the cell membrane, serving as an ATP-driven molecular motor driving the stepwise translocation of polypeptide chains across the membrane. The sequence is that of Protein translocase subunit SecA from Leptospira biflexa serovar Patoc (strain Patoc 1 / Ames).